A 262-amino-acid chain; its full sequence is Glutamate racemase (262 aa).

Substrate-binding positions include 5–6 (DS) and 37–38 (YG). The Proton donor/acceptor role is filled by C69. A substrate-binding site is contributed by 70 to 71 (NT). Residue C181 is the Proton donor/acceptor of the active site. Residue 182 to 183 (TH) coordinates substrate.

The protein belongs to the aspartate/glutamate racemases family.

It carries out the reaction L-glutamate = D-glutamate. Its pathway is cell wall biogenesis; peptidoglycan biosynthesis. In terms of biological role, provides the (R)-glutamate required for cell wall biosynthesis. This Buchnera aphidicola subsp. Acyrthosiphon pisum (strain 5A) protein is Glutamate racemase.